Here is an 83-residue protein sequence, read N- to C-terminus: Mu-theraphotoxin-Hhn2p (83 aa).

The first 21 residues, 1–21 (MKASMYLALAGLVLLFVVGYA), serve as a signal peptide directing secretion. Positions 22-48 (SESEEKEFPRELLSKIFAVDDFKGEER) are excised as a propeptide. 3 disulfides stabilise this stretch: Cys-50-Cys-65, Cys-57-Cys-70, and Cys-64-Cys-77. Leu-81 is modified (leucine amide).

The protein belongs to the neurotoxin 10 (Hwtx-1) family. 15 (Hntx-3) subfamily. In terms of assembly, monomer. In terms of tissue distribution, expressed by the venom gland.

It is found in the secreted. Functionally, lethal neurotoxin. Selectively blocks tetrodotoxin-sensitive voltage-gated sodium channels (Nav). Does not affect tetrodotoxin-resistant voltage-gated sodium channels or calcium channels. This chain is Mu-theraphotoxin-Hhn2p, found in Cyriopagopus hainanus (Chinese bird spider).